The chain runs to 336 residues: Dihydroorotate dehydrogenase (quinone) (336 aa).

Residues 62–66 (AGLDK) and Thr-86 contribute to the FMN site. Lys-66 provides a ligand contact to substrate. 111–115 (NRMGF) is a binding site for substrate. FMN contacts are provided by Asn-139 and Asn-172. Residue Asn-172 coordinates substrate. The active-site Nucleophile is the Ser-175. Asn-177 lines the substrate pocket. Positions 217 and 245 each coordinate FMN. 246–247 (NT) contacts substrate. FMN contacts are provided by residues Gly-268, Gly-297, and 318-319 (YS).

The protein belongs to the dihydroorotate dehydrogenase family. Type 2 subfamily. In terms of assembly, monomer. FMN serves as cofactor.

The protein resides in the cell membrane. The catalysed reaction is (S)-dihydroorotate + a quinone = orotate + a quinol. It participates in pyrimidine metabolism; UMP biosynthesis via de novo pathway; orotate from (S)-dihydroorotate (quinone route): step 1/1. Functionally, catalyzes the conversion of dihydroorotate to orotate with quinone as electron acceptor. The protein is Dihydroorotate dehydrogenase (quinone) of Aeromonas hydrophila subsp. hydrophila (strain ATCC 7966 / DSM 30187 / BCRC 13018 / CCUG 14551 / JCM 1027 / KCTC 2358 / NCIMB 9240 / NCTC 8049).